The primary structure comprises 214 residues: Orotate phosphoribosyltransferase (214 aa).

Lys26 provides a ligand contact to 5-phospho-alpha-D-ribose 1-diphosphate. 34-35 provides a ligand contact to orotate; sequence FF. 5-phospho-alpha-D-ribose 1-diphosphate contacts are provided by residues 72–73, Arg98, Lys99, Lys102, His104, and 123–131; these read YK and DDVISAGTS. Orotate is bound by residues Ser127 and Arg155.

The protein belongs to the purine/pyrimidine phosphoribosyltransferase family. PyrE subfamily. As to quaternary structure, homodimer. Requires Mg(2+) as cofactor.

It catalyses the reaction orotidine 5'-phosphate + diphosphate = orotate + 5-phospho-alpha-D-ribose 1-diphosphate. The protein operates within pyrimidine metabolism; UMP biosynthesis via de novo pathway; UMP from orotate: step 1/2. Its function is as follows. Catalyzes the transfer of a ribosyl phosphate group from 5-phosphoribose 1-diphosphate to orotate, leading to the formation of orotidine monophosphate (OMP). The chain is Orotate phosphoribosyltransferase from Chromobacterium violaceum (strain ATCC 12472 / DSM 30191 / JCM 1249 / CCUG 213 / NBRC 12614 / NCIMB 9131 / NCTC 9757 / MK).